The following is a 200-amino-acid chain: Recombination protein RecR (200 aa).

A C4-type zinc finger spans residues Cys58–Cys75. Residues Gln82–Pro177 enclose the Toprim domain.

It belongs to the RecR family.

May play a role in DNA repair. It seems to be involved in an RecBC-independent recombinational process of DNA repair. It may act with RecF and RecO. This Chlamydia pneumoniae (Chlamydophila pneumoniae) protein is Recombination protein RecR.